Here is a 327-residue protein sequence, read N- to C-terminus: Complex I intermediate-associated protein 30, mitochondrial (327 aa).

A mitochondrion-targeting transit peptide spans 1 to 24 (MALVHKLLRGTYILRKFSKPASAL). Residues 42-63 (PVASPGKASSQRKTEGDLQGDH) are disordered. Positions 53-63 (RKTEGDLQGDH) are enriched in basic and acidic residues. Position 318 is a phosphoserine (Ser318).

It belongs to the CIA30 family. As to quaternary structure, part of the mitochondrial complex I assembly/MCIA complex that comprises at least the core subunits TMEM126B, NDUFAF1, ECSIT and ACAD9 and complement subunits such as COA1 and TMEM186. Interacts with ECSIT. Interacts with ACAD9. At early stages of complex I assembly, it is found in intermediate subcomplexes that contain different subunits including NDUFB6, NDUFA6, NDUFA9, NDUFS3, NDUFS7, ND1, ND2 and ND3. Interacts with TMEM70 and TMEM242.

The protein localises to the mitochondrion. Its subcellular location is the mitochondrion matrix. Functionally, as part of the MCIA complex, involved in the assembly of the mitochondrial complex I. The sequence is that of Complex I intermediate-associated protein 30, mitochondrial from Pongo pygmaeus (Bornean orangutan).